The primary structure comprises 127 residues: Anti-adapter protein IraD (127 aa).

This sequence belongs to the GpW/Gp25 family. IraD subfamily. In terms of assembly, interacts with RssB.

Its subcellular location is the cytoplasm. Inhibits RpoS proteolysis by regulating RssB activity, thereby increasing the stability of the sigma stress factor RpoS during oxidative stress. Its effect on RpoS stability is due to its interaction with RssB, which probably blocks the interaction of RssB with RpoS, and the consequent delivery of the RssB-RpoS complex to the ClpXP protein degradation pathway. In Escherichia coli (strain UTI89 / UPEC), this protein is Anti-adapter protein IraD.